Reading from the N-terminus, the 222-residue chain is UPF0585 protein CG18661 (222 aa).

Belongs to the UPF0585 family.

This Drosophila melanogaster (Fruit fly) protein is UPF0585 protein CG18661.